The sequence spans 598 residues: Nuclear receptor subfamily 4 group A member 2 (598 aa).

Positions 1–22 (MPCVQAQYGSSPQGASPASQGY) are disordered. Polar residues predominate over residues 7–18 (QYGSSPQGASPA). The nuclear receptor DNA-binding region spans 260–335 (EGLCAVCGDN…VGMVKEVVRT (76 aa)). 2 NR C4-type zinc fingers span residues 263–283 (CAVCGDNAACQHYGVRTCEGC) and 299–318 (CLANKNCPVDKRRRNRCQYC). The Bipartite nuclear localization signal (NLS1) motif lies at 287 to 314 (FKRTVQKNAKYVCLANKNCPVDKRRRNR). A disordered region spans residues 337 to 361 (SLKGRRGRLPSKPKSPQEPSPPSPP). The short motif at 338-350 (LKGRRGRLPSKPK) is the Nuclear localization signal (NLS1) element. The segment covering 352 to 361 (PQEPSPPSPP) has biased composition (pro residues). One can recognise an NR LBD domain in the interval 360-595 (PPVSLISALV…AIIDKLFLDT (236 aa)). Positions 443-452 (FLELFVLRLA) match the nuclear export sequence (NES1) motif. Positions 568-577 (QGLQRIFYLK) match the nuclear export sequence (NES2) motif.

The protein belongs to the nuclear hormone receptor family. Interacts with SFPQ, NCOR2, SIN3A and HADC1. The interaction with NCOR2 increases in the absence of PITX3. Interacts with PER2.

It is found in the cytoplasm. The protein resides in the nucleus. Its function is as follows. Transcriptional regulator which is important for the differentiation and maintenance of meso-diencephalic dopaminergic (mdDA) neurons during development. It is crucial for expression of a set of genes such as SLC6A3, SLC18A2, TH and DRD2 which are essential for development of mdDA neurons. The polypeptide is Nuclear receptor subfamily 4 group A member 2 (NR4A2) (Pongo abelii (Sumatran orangutan)).